The chain runs to 690 residues: Methionine--tRNA ligase (690 aa).

Positions 20 to 30 (PYANGSIHLGH) match the 'HIGH' region motif. Residues Cys-151, Cys-154, Cys-164, and Cys-167 each coordinate Zn(2+). Residues 337–341 (KMSKS) carry the 'KMSKS' region motif. Residue Lys-340 participates in ATP binding. Residues 589 to 690 (DFAKVDLRIA…EGAQPGMRVM (102 aa)) enclose the tRNA-binding domain.

This sequence belongs to the class-I aminoacyl-tRNA synthetase family. MetG type 1 subfamily. In terms of assembly, homodimer. It depends on Zn(2+) as a cofactor.

The protein resides in the cytoplasm. The enzyme catalyses tRNA(Met) + L-methionine + ATP = L-methionyl-tRNA(Met) + AMP + diphosphate. Functionally, is required not only for elongation of protein synthesis but also for the initiation of all mRNA translation through initiator tRNA(fMet) aminoacylation. The polypeptide is Methionine--tRNA ligase (Vibrio vulnificus (strain YJ016)).